The chain runs to 412 residues: Argininosuccinate synthase (412 aa).

Residues 10 to 18 and Ala-36 contribute to the ATP site; that span reads AYSGGLDTS. 2 residues coordinate L-citrulline: Tyr-87 and Ser-92. Tyr-87 is modified (phosphotyrosine). Residue Lys-112 is modified to N6-acetyllysine. Tyr-113 carries the phosphotyrosine modification. Residue 115-123 participates in ATP binding; it reads SHGATGKGN. The L-aspartate site is built by Thr-119, Asn-123, and Asp-124. Position 123 (Asn-123) interacts with L-citrulline. Arg-127 provides a ligand contact to L-citrulline. 2 positions are modified to N6-acetyllysine; by CLOCK: Lys-165 and Lys-176. 2 residues coordinate L-citrulline: Ser-180 and Ser-189. Position 180 is a phosphoserine (Ser-180). Ser-219 is modified (phosphoserine). Glu-270 and Tyr-282 together coordinate L-citrulline.

The protein belongs to the argininosuccinate synthase family. Type 1 subfamily. Homotetramer. Interacts with NMRAL1. Interacts with CLOCK; in a circadian manner. Forms tissue-specific complexes with ASL, SLC7A1, HSP90AA1 and nitric oxide synthase NOS1, NOS2 or NOS3; the complex regulates cell-autonomous L-arginine synthesis and citrulline recycling while channeling extracellular L-arginine to nitric oxide synthesis pathway. In terms of processing, acetylated by CLOCK in a circadian manner which negatively regulates its enzyme activity. Deacetylated by histone deacetylases.

The protein localises to the cytoplasm. The protein resides in the cytosol. The enzyme catalyses L-citrulline + L-aspartate + ATP = 2-(N(omega)-L-arginino)succinate + AMP + diphosphate + H(+). Its pathway is amino-acid biosynthesis; L-arginine biosynthesis; L-arginine from L-ornithine and carbamoyl phosphate: step 2/3. It functions in the pathway nitrogen metabolism; urea cycle; (N(omega)-L-arginino)succinate from L-aspartate and L-citrulline: step 1/1. Its function is as follows. One of the enzymes of the urea cycle, the metabolic pathway transforming neurotoxic amonia produced by protein catabolism into inocuous urea in the liver of ureotelic animals. Catalyzes the formation of arginosuccinate from aspartate, citrulline and ATP and together with ASL it is responsible for the biosynthesis of arginine in most body tissues. The chain is Argininosuccinate synthase from Bos taurus (Bovine).